Here is an 88-residue protein sequence, read N- to C-terminus: Pape peptide (88 aa).

Positions 1-22 are cleaved as a signal peptide; the sequence is MNRKTLLVIFFVTLLIAEEVNS. Residues 23–45 constitute a propeptide that is removed on maturation; it reads FRLGGFLKKIWRSKLVKRLRSKG. Positions 49-88 are disordered; that stretch reads LKEALAPEPAPEPAPEPAPEAAPEAAPEPAAAAPERRRRR. The segment covering 56–68 has biased composition (pro residues); it reads EPAPEPAPEPAPE. PAPE repeat units follow at residues 57–60, 61–64, and 65–68; these read PAPE. Residues 69–81 show a composition bias toward low complexity; sequence AAPEAAPEPAAAA.

Expressed by the venom gland.

It is found in the secreted. In Tityus serrulatus (Brazilian scorpion), this protein is Pape peptide.